The chain runs to 131 residues: MAKANTRKTRRKKERKNIEHGCAHIKSTFNNSIVTITDAVGNALSWSSAGALGFKGSRKSTPFAAQMAAETAATAAMEHGLKSIEVYVKGPGAGREAAIRSLQAAGLEITLIKDVTPIPHNGCRPPKRRRV.

Belongs to the universal ribosomal protein uS11 family. Part of the 30S ribosomal subunit. Interacts with proteins S7 and S18. Binds to IF-3.

Its function is as follows. Located on the platform of the 30S subunit, it bridges several disparate RNA helices of the 16S rRNA. Forms part of the Shine-Dalgarno cleft in the 70S ribosome. The chain is Small ribosomal subunit protein uS11 from Clostridium novyi (strain NT).